Consider the following 551-residue polypeptide: Dol-P-Man:Man(7)GlcNAc(2)-PP-Dol alpha-1,6-mannosyltransferase (551 aa).

The Lumenal segment spans residues 1-2; it reads MR. A helical membrane pass occupies residues 3–23; sequence WSVLDTVLLTVISFHLIQAPF. The Cytoplasmic portion of the chain corresponds to 24–61; sequence TKVEESFNIQAIHDILTYSVFDISQYDHLKFPGVVPRT. The chain crosses the membrane as a helical span at residues 62–82; it reads FVGAVIIAMLSRPYLYLSSLI. The Lumenal segment spans residues 83–89; the sequence is QTSRPTS. The chain crosses the membrane as a helical span at residues 90–110; the sequence is IDVQLVVRGIVGLTNGLSFIY. The Cytoplasmic portion of the chain corresponds to 111–136; that stretch reads LKNCLQDMFDEITEKKKEENEDKDIY. Residues 137 to 157 traverse the membrane as a helical segment; sequence IYDSAGTWFLLFLIGSFHLMF. Residues 158–178 lie on the Lumenal side of the membrane; that stretch reads YSTRTLPNFVMTLPLTNVALG. A helical transmembrane segment spans residues 179-199; it reads WVLLGRYNAAIFLSALVAIVF. Topologically, residues 200–202 are cytoplasmic; that stretch reads RLE. The chain crosses the membrane as a helical span at residues 203–223; it reads VSALSAGIALFSVIFKKISLF. Topologically, residues 224-227 are lumenal; that stretch reads DAIK. The helical transmembrane segment at 228–248 threads the bilayer; it reads FGIFGLGLGSAISITVDSYFW. Topologically, residues 249-275 are cytoplasmic; the sequence is QEWCLPEVDGFLFNVVAGYASKWGVEP. The chain crosses the membrane as a helical span at residues 276–296; the sequence is VTAYFTHYLRMMFMPPTVLLL. Over 297-303 the chain is Lumenal; sequence NYFGYKL. The chain crosses the membrane as a helical span at residues 304–324; that stretch reads APAKLKIVSLASLFHIIVLSF. Over 325 to 331 the chain is Cytoplasmic; it reads QPHKEWR. A helical transmembrane segment spans residues 332-352; sequence FIIYAVPSIMLLGATGAAHLW. Residues 353-365 lie on the Lumenal side of the membrane; that stretch reads ENMKVKKITNVLC. The helical transmembrane segment at 366–386 threads the bilayer; sequence LAILPLSIMTSFFISMAFLYI. Topologically, residues 387–417 are cytoplasmic; it reads SRMNYPGGEALTSFNDMIVEKNITNATVHIS. Residues 418-438 traverse the membrane as a helical segment; sequence IPPCMTGVTLFGELNYGVYGI. At 439–551 the chain is on the lumenal side; the sequence is NYDKTENTTL…KRIKQDEKTD (113 aa).

This sequence belongs to the glycosyltransferase 22 family.

The protein resides in the endoplasmic reticulum membrane. It carries out the reaction an alpha-D-Man-(1-&gt;2)-alpha-D-Man-(1-&gt;2)-alpha-D-Man-(1-&gt;3)-[alpha-D-Man-(1-&gt;2)-alpha-D-Man-(1-&gt;3)-alpha-D-Man-(1-&gt;6)]-beta-D-Man-(1-&gt;4)-beta-D-GlcNAc-(1-&gt;4)-alpha-D-GlcNAc-diphospho-di-trans,poly-cis-dolichol + a di-trans,poly-cis-dolichyl beta-D-mannosyl phosphate = an alpha-D-Man-(1-&gt;2)-alpha-D-Man-(1-&gt;2)-alpha-D-Man-(1-&gt;3)-[alpha-D-Man-(1-&gt;2)-alpha-D-Man-(1-&gt;3)-[alpha-D-Man-(1-&gt;6)]-alpha-D-Man-(1-&gt;6)]-beta-D-Man-(1-&gt;4)-beta-D-GlcNAc-(1-&gt;4)-alpha-D-GlcNAc-diphospho-di-trans,poly-cis-dolichol + a di-trans,poly-cis-dolichyl phosphate + H(+). Its pathway is protein modification; protein glycosylation. Its function is as follows. Mannosyltransferase that operates in the biosynthetic pathway of dolichol-linked oligosaccharides, the glycan precursors employed in protein asparagine (N)-glycosylation. The assembly of dolichol-linked oligosaccharides begins on the cytosolic side of the endoplasmic reticulum membrane and finishes in its lumen. The sequential addition of sugars to dolichol pyrophosphate produces dolichol-linked oligosaccharides containing fourteen sugars, including two GlcNAcs, nine mannoses and three glucoses. Once assembled, the oligosaccharide is transferred from the lipid to nascent proteins by oligosaccharyltransferases. In the lumen of the endoplasmic reticulum, adds the eighth mannose residue in an alpha-1,6 linkage onto Man(7)GlcNAc(2)-PP-dolichol to produce Man(8)GlcNAc(2)-PP-dolichol. The protein is Dol-P-Man:Man(7)GlcNAc(2)-PP-Dol alpha-1,6-mannosyltransferase (ALG12) of Saccharomyces cerevisiae (strain ATCC 204508 / S288c) (Baker's yeast).